The primary structure comprises 446 residues: Amino-acid acetyltransferase (446 aa).

Residues 299–431 form the N-acetyltransferase domain; sequence EQVRDAEIDD…SHLPMKKQKL (133 aa).

The protein belongs to the acetyltransferase family. ArgA subfamily.

The protein localises to the cytoplasm. The enzyme catalyses L-glutamate + acetyl-CoA = N-acetyl-L-glutamate + CoA + H(+). Its pathway is amino-acid biosynthesis; L-arginine biosynthesis; N(2)-acetyl-L-ornithine from L-glutamate: step 1/4. The chain is Amino-acid acetyltransferase from Aliivibrio fischeri (strain MJ11) (Vibrio fischeri).